The following is a 327-amino-acid chain: Ribosomal RNA small subunit methyltransferase H (327 aa).

Residues 37-39 (GGY), Asp55, Phe82, Asp99, and Gln106 each bind S-adenosyl-L-methionine. The tract at residues 303–327 (IATRTDAPAQPVAPETLGLPQLEGF) is disordered.

It belongs to the methyltransferase superfamily. RsmH family.

It localises to the cytoplasm. It catalyses the reaction cytidine(1402) in 16S rRNA + S-adenosyl-L-methionine = N(4)-methylcytidine(1402) in 16S rRNA + S-adenosyl-L-homocysteine + H(+). Specifically methylates the N4 position of cytidine in position 1402 (C1402) of 16S rRNA. The protein is Ribosomal RNA small subunit methyltransferase H of Jannaschia sp. (strain CCS1).